A 347-amino-acid chain; its full sequence is MNPLIFPIIMLTIMLGTLIVMISSHWLMIWMGFEMNMLAVIPVLMKQYNPRSMEAATKYFLTQATASMLLMLAIVINLLHSGQWTFTKLMDPTASIIMTLALTMKLGLAPFHFWVPEVTQGVSLTSGLVLLTWQKLAPLSVLYTIAPVINSDLILTMSILSIMIGGWGGLNQTQLRKILAYSSIAHMGWMTSVLIFNPTMTLLNLLLYILMTSTTFALFMTVSTTTTLSLSHAWNKTPLITTSILIMMLSLGGLPPLTGFLPKWMIIQELTKNDNIILATLMAIAALLSLFFYMRLTYATSLTMFPTTNNMKIKWQFNKIKQMKCLSPLIILSTLTLPLAPAMMILN.

11 consecutive transmembrane segments (helical) span residues 3-23, 25-45, 59-79, 96-116, 122-142, 145-165, 178-198, 202-222, 240-260, 276-296, and 326-346; these read PLIF…VMIS, HWLM…PVLM, YFLT…INLL, IIMT…FWVP, VSLT…LSVL, IAPV…IMIG, ILAY…IFNP, LLNL…FMTV, ITTS…LTGF, IILA…YMRL, and LSPL…MMIL.

It belongs to the complex I subunit 2 family. As to quaternary structure, core subunit of respiratory chain NADH dehydrogenase (Complex I) which is composed of 45 different subunits. Interacts with TMEM242.

It localises to the mitochondrion inner membrane. The enzyme catalyses a ubiquinone + NADH + 5 H(+)(in) = a ubiquinol + NAD(+) + 4 H(+)(out). Core subunit of the mitochondrial membrane respiratory chain NADH dehydrogenase (Complex I) which catalyzes electron transfer from NADH through the respiratory chain, using ubiquinone as an electron acceptor. Essential for the catalytic activity and assembly of complex I. The protein is NADH-ubiquinone oxidoreductase chain 2 of Peropteryx macrotis (Lesser dog-like bat).